The following is a 510-amino-acid chain: DAP3-binding cell death enhancer 1 (510 aa).

A mitochondrion-targeting transit peptide spans 1 to 23; the sequence is MWRLTGILGRALPRLLGPGFRGI. Disordered regions lie at residues 19 to 61 and 142 to 185; these read GFRG…SRDP and VLPR…SGLL. A propeptide spans 24-101 (extended MTS); it reads TPKPTSSDGS…AVLALHLARQ (78 aa). A compositionally biased stretch (low complexity) spans 35–45; sequence TTSPTLPLTRL. Basic and acidic residues-rich tracts occupy residues 46–61 and 155–167; these read SFDR…SRDP and GLRE…EDHP. Polar residues predominate over residues 169 to 181; it reads APSQCLPSDSSLR. 7 TPR repeats span residues 213-245, 246-278, 279-313, 314-351, 352-385, 386-423, and 471-499; these read AHPP…QLSV, AITF…RGYS, KAQY…VQGH, SLAQ…DSGL, TEAQ…SNGD, SQSR…GNEP, and ASST…TIPS. The SIFI-degron signature appears at 307 to 326; that stretch reads LAAVQGHSLAQYRYARCLLQ.

It belongs to the DELE1 family. Interacts with DAP3. In terms of assembly, interacts (via TPR repeats) with EIF2AK1/HRI; activating the protein kinase activity of EIF2AK1/HRI, thereby promoting the integrated stress response (ISR). As to quaternary structure, homooctamer; oligomerization is required to activate EIF2AK1/HRI. Interacts (via TPR repeats) with EIF2AK1/HRI; activating the protein kinase activity of EIF2AK1/HRI, thereby promoting the integrated stress response (ISR). Unstable protein in absence of stress: imported in the mitochondrial matrix following processing by the mitochondrial-processing peptidase (MPP), where it is degraded by LONP1. Stabilized in response to iron deficiency: iron deficiency impairs mitochondrial import, promoting localization at the mitochondrial surface and stabilization. Cleaved by OMA1 in response to mitochondrial stress, generating the DAP3-binding cell death enhancer 1 short form (DELE1(S) or S-DELE1) that accumulates in the cytosol and activates the protein kinase activity of EIF2AK1/HRI. Protein cleavage by OMA1 can take place at different positions, and apparently does not require a specific sequence motif. In terms of processing, ubiquitinated and degraded by the SIFI complex once the mitochondrial stress has been resolved, thereby providing stress response silencing. Within the SIFI complex, UBR4 initiates ubiquitin chain that are further elongated or branched by KCMF1.

It is found in the mitochondrion. The protein resides in the mitochondrion outer membrane. Its subcellular location is the mitochondrion inner membrane. The protein localises to the cytoplasm. It localises to the cytosol. Protein kinase activator that acts as a key activator of the integrated stress response (ISR) following various stresses, such as iron deficiency, mitochondrial stress or mitochondrial DNA breaks. Detects impaired protein import and processing in mitochondria, activating the ISR. May also required for the induction of death receptor-mediated apoptosis through the regulation of caspase activation. Functionally, protein kinase activator that activates the ISR in response to iron deficiency: iron deficiency impairs mitochondrial import, promoting DELE1 localization at the mitochondrial surface, where it binds and activates EIF2AK1/HRI to trigger the ISR. In terms of biological role, protein kinase activator generated by protein cleavage in response to mitochondrial stress, which accumulates in the cytosol and specifically binds to and activates the protein kinase activity of EIF2AK1/HRI. It thereby activates the integrated stress response (ISR): EIF2AK1/HRI activation promotes eIF-2-alpha (EIF2S1) phosphorylation, leading to a decrease in global protein synthesis and the induction of selected genes, including the transcription factor ATF4, the master transcriptional regulator of the ISR. Also acts as an activator of PRKN-independent mitophagy: activates the protein kinase activity of EIF2AK1/HRI in response to mitochondrial damage, promoting eIF-2-alpha (EIF2S1) phosphorylation, leading to mitochondrial localization of EIF2S1 followed by induction of mitophagy. In Mus musculus (Mouse), this protein is DAP3-binding cell death enhancer 1.